The sequence spans 129 residues: Small ribosomal subunit protein bS6 (129 aa).

Positions 103-129 are disordered; the sequence is LKQKEERAERAPRREERAEAKPEAAAE. Over residues 104-129 the composition is skewed to basic and acidic residues; the sequence is KQKEERAERAPRREERAEAKPEAAAE.

The protein belongs to the bacterial ribosomal protein bS6 family.

Binds together with bS18 to 16S ribosomal RNA. This is Small ribosomal subunit protein bS6 from Vibrio campbellii (strain ATCC BAA-1116).